The sequence spans 148 residues: Deoxyuridine 5'-triphosphate nucleotidohydrolase (148 aa).

Substrate is bound by residues 67–69 (RSG), N80, 84–86 (LID), and M94.

The protein belongs to the dUTPase family. The cofactor is Mg(2+).

The enzyme catalyses dUTP + H2O = dUMP + diphosphate + H(+). The protein operates within pyrimidine metabolism; dUMP biosynthesis; dUMP from dCTP (dUTP route): step 2/2. Its function is as follows. This enzyme is involved in nucleotide metabolism: it produces dUMP, the immediate precursor of thymidine nucleotides and it decreases the intracellular concentration of dUTP so that uracil cannot be incorporated into DNA. This Paraburkholderia phymatum (strain DSM 17167 / CIP 108236 / LMG 21445 / STM815) (Burkholderia phymatum) protein is Deoxyuridine 5'-triphosphate nucleotidohydrolase.